The sequence spans 168 residues: MAKVEAQQQKDDLQEKLIAVNRVSKVVKGGRIFSFTALTVVGDGNGRVGYGYGKAREVPAAIQKAMEKARRNMVTVELNEGTLHHPVKGRHTGSRVYMQPASQGTGIIAGGAMRAVLEVAGVHNVLSKAYGSTNPINIVRATVDALTHMKSPAQVAAKRGLSVEEIRG.

The region spanning 13 to 76 (LQEKLIAVNR…EKARRNMVTV (64 aa)) is the S5 DRBM domain.

The protein belongs to the universal ribosomal protein uS5 family. Part of the 30S ribosomal subunit. Contacts proteins S4 and S8.

Functionally, with S4 and S12 plays an important role in translational accuracy. In terms of biological role, located at the back of the 30S subunit body where it stabilizes the conformation of the head with respect to the body. The sequence is that of Small ribosomal subunit protein uS5 from Shewanella amazonensis (strain ATCC BAA-1098 / SB2B).